A 119-amino-acid chain; its full sequence is Protein YdaY (119 aa).

The polypeptide is Protein YdaY (ydaY) (Escherichia coli (strain K12)).